The primary structure comprises 293 residues: Xyloglucan endotransglucosylase/hydrolase protein 31 (293 aa).

An N-terminal signal peptide occupies residues 1–20 (MALSLIFLALLVLCPSSGHS). Positions 29-230 (YPSSRVPTSP…YRYQPFVAKY (202 aa)) constitute a GH16 domain. Residue E114 is the Nucleophile of the active site. The active-site Proton donor is E118. Xyloglucan is bound by residues E118, 131 to 133 (QTN), 141 to 148 (DRNVIGRE), and 209 to 210 (DW). 2 cysteine pairs are disulfide-bonded: C238-C246 and C280-C293. A xyloglucan-binding site is contributed by R285.

This sequence belongs to the glycosyl hydrolase 16 family. XTH group 3 subfamily. Interacts with XTH17. The formation of an XTH17-XTH31 dimer may be required for XET activity. Contains at least one intrachain disulfide bond essential for its enzymatic activity. Predominantly expressed in root. Weakly expressed in influorescence stems. Expressed in root tips and elongation zones, stems, young leaves, flowers and siliques. Expressed in root, hypocotyl, and etiolated whole seedlings.

Its subcellular location is the secreted. It localises to the cell wall. The protein localises to the extracellular space. The protein resides in the apoplast. It is found in the cell membrane. The catalysed reaction is breaks a beta-(1-&gt;4) bond in the backbone of a xyloglucan and transfers the xyloglucanyl segment on to O-4 of the non-reducing terminal glucose residue of an acceptor, which can be a xyloglucan or an oligosaccharide of xyloglucan.. The enzyme catalyses xyloglucan + H2O = xyloglucan oligosaccharides.. Functionally, catalyzes xyloglucan endohydrolysis (XEH) and/or endotransglycosylation (XET). Cleaves and religates xyloglucan polymers, an essential constituent of the primary cell wall, and thereby participates in cell wall construction of growing tissues. Involved in the accumulation of hemicelluloses. Has a high XEH activity and only a slight XET activity in vitro, but the main in planta activity seems to be XET, thus controlling aluminum sensitivity. Acceptor preferences are XXXGol = XXFGol &gt; XXLGol &gt; XLLGol = XLFGol. The protein is Xyloglucan endotransglucosylase/hydrolase protein 31 of Arabidopsis thaliana (Mouse-ear cress).